The chain runs to 201 residues: MTDLLPPRFYARDALEVAADLLGASLCREQVVLRITEVEAYRWPEDTANHGRHGQTLRNEPLWGPPGRVYLYLCYGIHHLLNLVTGEEGQAAAVLIRACEPVAGLDLIQRRRRGKIKPGLLTGPGKVGAALGLDLSWNHHPLYEPGGLEVRRGTPVAALLAGPRVGIAYAHPEHRDAPWRLAIPDNPWVSCRSQLQPRQQN.

This sequence belongs to the DNA glycosylase MPG family.

The chain is Putative 3-methyladenine DNA glycosylase from Nitrosococcus oceani (strain ATCC 19707 / BCRC 17464 / JCM 30415 / NCIMB 11848 / C-107).